The following is a 139-amino-acid chain: D-ribose pyranase (139 aa).

H20 acts as the Proton donor in catalysis. Substrate contacts are provided by residues D28, H106, and Y128–N130.

It belongs to the RbsD / FucU family. RbsD subfamily. Homodecamer.

The protein resides in the cytoplasm. It catalyses the reaction beta-D-ribopyranose = beta-D-ribofuranose. It participates in carbohydrate metabolism; D-ribose degradation; D-ribose 5-phosphate from beta-D-ribopyranose: step 1/2. Catalyzes the interconversion of beta-pyran and beta-furan forms of D-ribose. This Glaesserella parasuis serovar 5 (strain SH0165) (Haemophilus parasuis) protein is D-ribose pyranase.